The following is a 431-amino-acid chain: Na(+)-translocating NADH-quinone reductase subunit F (431 aa).

Residues 10 to 30 traverse the membrane as a helical segment; the sequence is IFVASAAFCSLGLILVAVILL. The region spanning 41–133 is the 2Fe-2S ferredoxin-type domain; sequence CKLKINNDDS…DLCLEVEERY (93 aa). [2Fe-2S] cluster contacts are provided by Cys-76, Cys-82, Cys-85, and Cys-117. The region spanning 136 to 286 is the FAD-binding FR-type domain; sequence ASSWEGTVVS…SGPYGESFMK (151 aa).

Belongs to the NqrF family. In terms of assembly, composed of six subunits; NqrA, NqrB, NqrC, NqrD, NqrE and NqrF. The cofactor is [2Fe-2S] cluster. FAD serves as cofactor.

The protein resides in the cell inner membrane. The catalysed reaction is a ubiquinone + n Na(+)(in) + NADH + H(+) = a ubiquinol + n Na(+)(out) + NAD(+). Functionally, NQR complex catalyzes the reduction of ubiquinone-1 to ubiquinol by two successive reactions, coupled with the transport of Na(+) ions from the cytoplasm to the periplasm. The first step is catalyzed by NqrF, which accepts electrons from NADH and reduces ubiquinone-1 to ubisemiquinone by a one-electron transfer pathway. The sequence is that of Na(+)-translocating NADH-quinone reductase subunit F from Chlamydia trachomatis serovar A (strain ATCC VR-571B / DSM 19440 / HAR-13).